Consider the following 420-residue polypeptide: 26S proteasome non-ATPase regulatory subunit 4 (420 aa).

The VWFA domain maps to 1-174 (MSQEATIIAV…TGSHLISVAP (174 aa)). UIM domains are found at residues 210–229 (AEDP…QRMR), 255–274 (SEEA…NNTE), and 288–307 (SEED…MGEE). The segment at 392–420 (RKAINALTKSQSQRGSKKDEKEDEDKQNS) is disordered. Over residues 407–420 (SKKDEKEDEDKQNS) the composition is skewed to basic and acidic residues.

It belongs to the proteasome subunit S5A family. In terms of assembly, the 26S proteasome is composed of a core protease, known as the 20S proteasome, capped at one or both ends by the 19S regulatory complex (RC). The RC is composed of at least 18 different subunits in two subcomplexes, the base and the lid, which form the portions proximal and distal to the 20S proteolytic core, respectively.

In terms of biological role, binds and presumably selects ubiquitin-conjugates for destruction. In Schistosoma mansoni (Blood fluke), this protein is 26S proteasome non-ATPase regulatory subunit 4.